Consider the following 290-residue polypeptide: Zinc-finger homeodomain protein 2 (290 aa).

Positions 1-15 (MDFDDHDEGDGDEEM) are enriched in acidic residues. Positions 1 to 59 (MDFDDHDEGDGDEEMPPMPLSSGYDAPMQPGLGGGGGGVPKPGGGVGGGGGGGGGGGGG) are disordered. Positions 31–59 (GLGGGGGGVPKPGGGVGGGGGGGGGGGGG) are enriched in gly residues. Residues 63 to 112 (YRECLKNHAVGIGGHAVDGCGEFMASGEEGSIDALRCAACGCHRNFHRKE) form a ZF-HD dimerization-type; degenerate zinc finger. Residues 226 to 289 (KKRFRTKFTQ…NNKHTLGKKA (64 aa)) constitute a DNA-binding region (homeobox).

In terms of assembly, homo- and heterodimer with other ZFHD proteins.

It is found in the nucleus. In terms of biological role, putative transcription factor. In Oryza sativa subsp. japonica (Rice), this protein is Zinc-finger homeodomain protein 2 (ZHD2).